The chain runs to 1384 residues: Sterol 3-beta-glucosyltransferase (1384 aa).

Disordered stretches follow at residues 1 to 64 (MPNM…DGQL), 86 to 189 (ARFD…TPRA), and 204 to 229 (DKKQ…QSCA). Residues 7 to 19 (LLEDAKRRVDRRL) show a composition bias toward basic and acidic residues. Residues 21–36 (ASRQSISSSRIFSSAF) show a composition bias toward low complexity. Residues 38-47 (DRLKDDHDAQ) show a composition bias toward basic and acidic residues. Residues 146 to 156 (LRSLKPSPKSS) show a composition bias toward low complexity. Residues 158-172 (GTETTVQTEPPTSDE) show a composition bias toward polar residues. A compositionally biased stretch (low complexity) spans 174–189 (SPLASPRRARSATPRA). Positions 209-229 (ADQPSSSTKGETDGTSEQSCA) are enriched in polar residues. A GRAM 1 domain is found at 237–284 (KEMFGFEMPEKVLMEYACSLLQNILLQGYMYVTEGHICFYAYLPRKSA). The PH domain occupies 285–384 (VTIRSGYLHK…WVKALQKVIF (100 aa)). Disordered regions lie at residues 457–526 (MKTS…RQRD) and 560–629 (NRSD…VNSS). Polar residues-rich tracts occupy residues 458–473 (KTSQ…TSPA), 483–494 (WSLNSDLSQSRG), and 560–572 (NRSD…TIHT). The segment covering 578–588 (PSGDRTGRRLS) has biased composition (basic and acidic residues). A compositionally biased stretch (polar residues) spans 604-629 (RNGQEMQYASSDSDQGTQHPSKVNSS). One can recognise a GRAM 2 domain in the interval 714–817 (RFRAHFALPS…RDDCAVTVHQ (104 aa)). Ser901, Arg902, Asp904, Ala1204, His1206, His1219, Gly1223, Thr1224, Asp1243, and Gln1244 together coordinate UDP-alpha-D-glucose. Positions 1322–1336 (VSSTPFSPTPSAKTT) are enriched in polar residues. Positions 1322–1350 (VSSTPFSPTPSAKTTAEQEEDDVDDSEEW) are disordered. Over residues 1338-1350 (EQEEDDVDDSEEW) the composition is skewed to acidic residues.

It belongs to the glycosyltransferase 28 family.

The protein resides in the cytoplasm. Its subcellular location is the preautophagosomal structure membrane. It catalyses the reaction a sterol + UDP-alpha-D-glucose = a sterol 3-beta-D-glucoside + UDP + H(+). The catalysed reaction is ergosterol + UDP-alpha-D-glucose = ergosteryl 3-beta-D-glucoside + UDP + H(+). Sterol glycosyltransferase responsible for the glycosylation of ergosterol to form ergosterol-glucoside. Involved in cytoplasm to vacuole transport (Cvt), pexophagy or nonselective autophagy. This is Sterol 3-beta-glucosyltransferase from Aspergillus oryzae (strain ATCC 42149 / RIB 40) (Yellow koji mold).